The sequence spans 299 residues: MKQQDNPLIEQFLDALWLERNLAENTLASYRLDLHALVGWLTHHNSDLLRASPQDLQSFLAERIEGGYKATSSARLLSAMRRLFQYLYREKLREDDPTALLSSPKLPQRLPKDLSEAQVDALLNSPNVDIPLELRDKAMLEVLYATGLRVSELVGLTISDVSLRQGVVRVIGKGNKERLVPLGEEAVYWIENYMEHGRPWLVNGASLDVLFPSNRSQQMTRQTFWHRIKHYAILAGIDSERLSPHVLRHAFATHLLNHGADLRVVQMLLGHSDLSTTQIYTHVATERLRQLHQQHHPRA.

The Core-binding (CB) domain maps to 3-88 (QQDNPLIEQF…AMRRLFQYLY (86 aa)). The Tyr recombinase domain maps to 109–293 (RLPKDLSEAQ…ATERLRQLHQ (185 aa)). Residues Arg149, Lys173, His245, Arg248, and His271 contribute to the active site. Tyr280 functions as the O-(3'-phospho-DNA)-tyrosine intermediate in the catalytic mechanism.

It belongs to the 'phage' integrase family. XerD subfamily. In terms of assembly, forms a cyclic heterotetrameric complex composed of two molecules of XerC and two molecules of XerD, in which XerC interacts with XerD via its C-terminal region, XerD interacts with XerC via its C-terminal region and so on.

The protein localises to the cytoplasm. With respect to regulation, ftsK may regulate the catalytic switch between XerC and XerD in the heterotetrameric complex during the two steps of the recombination process. Functionally, site-specific tyrosine recombinase, which acts by catalyzing the cutting and rejoining of the recombining DNA molecules. Binds cooperatively to specific DNA consensus sequences that are separated from XerC binding sites by a short central region, forming the heterotetrameric XerC-XerD complex that recombines DNA substrates. The complex is essential to convert dimers of the bacterial chromosome into monomers to permit their segregation at cell division. It also contributes to the segregational stability of plasmids. In the complex XerD specifically exchanges the bottom DNA strands. This is Tyrosine recombinase XerD from Yersinia pestis.